Here is a 213-residue protein sequence, read N- to C-terminus: MAETEIPTQLYLISPLDVRGGFPQRLERALEAGRGVVTAFQFRVKGIDQHEAARLAEPLQAICAAHDVAFVVNDSIALAKRLKADGVHLGQDDGSPKEAREQLGREAQIGVTCHASRHLAMEAGEAGADYVAFGAFFDSATKDKGDAEQPTLELLEWWSQVFEIPCVAIGGITPDNCQPLIEAGADFLAVSGAVWSGDERAAVQAFAEQIAAA.

Residues 41–45 (QFRVK) and asparagine 73 each bind 4-amino-2-methyl-5-(diphosphooxymethyl)pyrimidine. Aspartate 74 and aspartate 93 together coordinate Mg(2+). Threonine 112 contributes to the 4-amino-2-methyl-5-(diphosphooxymethyl)pyrimidine binding site. 139-141 (SAT) contacts 2-[(2R,5Z)-2-carboxy-4-methylthiazol-5(2H)-ylidene]ethyl phosphate. A 4-amino-2-methyl-5-(diphosphooxymethyl)pyrimidine-binding site is contributed by lysine 142. Residue glycine 171 coordinates 2-[(2R,5Z)-2-carboxy-4-methylthiazol-5(2H)-ylidene]ethyl phosphate.

Belongs to the thiamine-phosphate synthase family. It depends on Mg(2+) as a cofactor.

It carries out the reaction 2-[(2R,5Z)-2-carboxy-4-methylthiazol-5(2H)-ylidene]ethyl phosphate + 4-amino-2-methyl-5-(diphosphooxymethyl)pyrimidine + 2 H(+) = thiamine phosphate + CO2 + diphosphate. The catalysed reaction is 2-(2-carboxy-4-methylthiazol-5-yl)ethyl phosphate + 4-amino-2-methyl-5-(diphosphooxymethyl)pyrimidine + 2 H(+) = thiamine phosphate + CO2 + diphosphate. The enzyme catalyses 4-methyl-5-(2-phosphooxyethyl)-thiazole + 4-amino-2-methyl-5-(diphosphooxymethyl)pyrimidine + H(+) = thiamine phosphate + diphosphate. Its pathway is cofactor biosynthesis; thiamine diphosphate biosynthesis; thiamine phosphate from 4-amino-2-methyl-5-diphosphomethylpyrimidine and 4-methyl-5-(2-phosphoethyl)-thiazole: step 1/1. In terms of biological role, condenses 4-methyl-5-(beta-hydroxyethyl)thiazole monophosphate (THZ-P) and 2-methyl-4-amino-5-hydroxymethyl pyrimidine pyrophosphate (HMP-PP) to form thiamine monophosphate (TMP). This Erythrobacter litoralis (strain HTCC2594) protein is Thiamine-phosphate synthase.